A 262-amino-acid polypeptide reads, in one-letter code: Phosphatidylglycerol--prolipoprotein diacylglyceryl transferase (262 aa).

A run of 4 helical transmembrane segments spans residues 9 to 29 (LGPLAIRWYALCIVTGLILAV), 41 to 61 (IIPDDILDFILVAFPLAILGA), 80 to 100 (IFAIWNGGLAIYGGLITGALV), and 109 to 129 (LINTWDFLDIAAPSVMIAQSL). Arg131 contacts a 1,2-diacyl-sn-glycero-3-phospho-(1'-sn-glycerol). The next 3 membrane-spanning stretches (helical) occupy residues 167–187 (QPTFLYESLWNLLGFALILIF), 197–217 (GHITAFYLIWYGFGRMVIEGM), and 226–246 (GLRVSQWLSVVFIGLGIMIVI).

It belongs to the Lgt family.

It is found in the cell membrane. It carries out the reaction L-cysteinyl-[prolipoprotein] + a 1,2-diacyl-sn-glycero-3-phospho-(1'-sn-glycerol) = an S-1,2-diacyl-sn-glyceryl-L-cysteinyl-[prolipoprotein] + sn-glycerol 1-phosphate + H(+). The protein operates within protein modification; lipoprotein biosynthesis (diacylglyceryl transfer). In terms of biological role, catalyzes the transfer of the diacylglyceryl group from phosphatidylglycerol to the sulfhydryl group of the N-terminal cysteine of a prolipoprotein, the first step in the formation of mature lipoproteins. The polypeptide is Phosphatidylglycerol--prolipoprotein diacylglyceryl transferase (Streptococcus pneumoniae (strain Taiwan19F-14)).